A 205-amino-acid polypeptide reads, in one-letter code: Small ribosomal subunit protein uS4 (205 aa).

The segment at 20 to 47 (WGRSKSPLNRGKENPPGQHGQRRKKPSD) is disordered. The region spanning 94-154 (CRLDAVVYRL…TKSKDMALIL (61 aa)) is the S4 RNA-binding domain.

This sequence belongs to the universal ribosomal protein uS4 family. As to quaternary structure, part of the 30S ribosomal subunit. Contacts protein S5. The interaction surface between S4 and S5 is involved in control of translational fidelity.

Its function is as follows. One of the primary rRNA binding proteins, it binds directly to 16S rRNA where it nucleates assembly of the body of the 30S subunit. Functionally, with S5 and S12 plays an important role in translational accuracy. This Paramagnetospirillum magneticum (strain ATCC 700264 / AMB-1) (Magnetospirillum magneticum) protein is Small ribosomal subunit protein uS4.